A 92-amino-acid polypeptide reads, in one-letter code: Small ribosomal subunit protein uS19 (92 aa).

Belongs to the universal ribosomal protein uS19 family.

Functionally, protein S19 forms a complex with S13 that binds strongly to the 16S ribosomal RNA. The chain is Small ribosomal subunit protein uS19 from Mycoplasmopsis synoviae (strain 53) (Mycoplasma synoviae).